A 922-amino-acid polypeptide reads, in one-letter code: DNA gyrase subunit A (922 aa).

One can recognise a Topo IIA-type catalytic domain in the interval 34-534 (LPDVRDGLKP…SSAEINIEDL (501 aa)). The active-site O-(5'-phospho-DNA)-tyrosine intermediate is the Tyr122. Positions 561-567 (QRRGGRG) match the GyrA-box motif. 2 disordered regions span residues 715–763 (MQPM…VRPM) and 899–922 (IDGEVSEGTDTAPDAGSAAADPEE). Residues 723 to 743 (DDVDGDDESVIDAGNDDDGSD) are compositionally biased toward acidic residues.

Belongs to the type II topoisomerase GyrA/ParC subunit family. Heterotetramer, composed of two GyrA and two GyrB chains. In the heterotetramer, GyrA contains the active site tyrosine that forms a transient covalent intermediate with DNA, while GyrB binds cofactors and catalyzes ATP hydrolysis.

The protein resides in the cytoplasm. It carries out the reaction ATP-dependent breakage, passage and rejoining of double-stranded DNA.. In terms of biological role, a type II topoisomerase that negatively supercoils closed circular double-stranded (ds) DNA in an ATP-dependent manner to modulate DNA topology and maintain chromosomes in an underwound state. Negative supercoiling favors strand separation, and DNA replication, transcription, recombination and repair, all of which involve strand separation. Also able to catalyze the interconversion of other topological isomers of dsDNA rings, including catenanes and knotted rings. Type II topoisomerases break and join 2 DNA strands simultaneously in an ATP-dependent manner. This is DNA gyrase subunit A from Aeromonas salmonicida.